The primary structure comprises 446 residues: Glucose-6-phosphate isomerase (446 aa).

The active-site Proton donor is the E287. Catalysis depends on residues H308 and K422.

It belongs to the GPI family.

It localises to the cytoplasm. The enzyme catalyses alpha-D-glucose 6-phosphate = beta-D-fructose 6-phosphate. It functions in the pathway carbohydrate biosynthesis; gluconeogenesis. The protein operates within carbohydrate degradation; glycolysis; D-glyceraldehyde 3-phosphate and glycerone phosphate from D-glucose: step 2/4. In terms of biological role, catalyzes the reversible isomerization of glucose-6-phosphate to fructose-6-phosphate. The sequence is that of Glucose-6-phosphate isomerase from Lactobacillus helveticus (strain DPC 4571).